Consider the following 246-residue polypeptide: Phosphonates import ATP-binding protein PhnC (246 aa).

The 245-residue stretch at 2–246 (IKFENVSKVY…ILDEVYRKEG (245 aa)) folds into the ABC transporter domain. Residue 35 to 42 (GTSGAGKS) participates in ATP binding.

Belongs to the ABC transporter superfamily. Phosphonates importer (TC 3.A.1.9.1) family. As to quaternary structure, the complex is composed of two ATP-binding proteins (PhnC), two transmembrane proteins (PhnE) and a solute-binding protein (PhnD).

The protein resides in the cell membrane. It catalyses the reaction phosphonate(out) + ATP + H2O = phosphonate(in) + ADP + phosphate + H(+). Its function is as follows. Part of the ABC transporter complex PhnCDE involved in phosphonates import. Responsible for energy coupling to the transport system. The protein is Phosphonates import ATP-binding protein PhnC of Lactococcus lactis subsp. cremoris (strain SK11).